We begin with the raw amino-acid sequence, 95 residues long: uncharacterized protein (95 aa).

The ABM domain maps to 2 to 92; it reads VREAAMLHIK…YTPFPTVEHF (91 aa).

This is an uncharacterized protein from Bacillus subtilis (strain 168).